Consider the following 504-residue polypeptide: ATP synthase subunit alpha, chloroplastic (504 aa).

170-177 (GDRQTGKT) is an ATP binding site.

It belongs to the ATPase alpha/beta chains family. In terms of assembly, F-type ATPases have 2 components, CF(1) - the catalytic core - and CF(0) - the membrane proton channel. CF(1) has five subunits: alpha(3), beta(3), gamma(1), delta(1), epsilon(1). CF(0) has four main subunits: a, b, b' and c.

The protein resides in the plastid. It localises to the chloroplast thylakoid membrane. It catalyses the reaction ATP + H2O + 4 H(+)(in) = ADP + phosphate + 5 H(+)(out). Functionally, produces ATP from ADP in the presence of a proton gradient across the membrane. The alpha chain is a regulatory subunit. The protein is ATP synthase subunit alpha, chloroplastic of Jasminum nudiflorum (Winter jasmine).